A 392-amino-acid polypeptide reads, in one-letter code: 2'-deamino-2'-hydroxyneamine transaminase (392 aa).

K249 bears the N6-(pyridoxal phosphate)lysine mark.

The protein belongs to the class-III pyridoxal-phosphate-dependent aminotransferase family. The cofactor is pyridoxal 5'-phosphate.

It catalyses the reaction neamine + 2-oxoglutarate = 6'-oxoparomamine + L-glutamate. It carries out the reaction 2'-deamino-2'-hydroxyneamine + 2-oxoglutarate = 2'-deamino-2'-hydroxy-6'-dehydroparomamine + L-glutamate. It functions in the pathway antibiotic biosynthesis; kanamycin biosynthesis. In terms of biological role, aminotransferase that has 6'-oxoglucosaminyl:L-glutamate aminotransferase activity by catalyzing pyridoxal-5'-phosphate-mediated transamination leading to the conversion of paromamine to neamine in the biosynthetic pathway of kanamycin B. The chain is 2'-deamino-2'-hydroxyneamine transaminase (kacL) from Streptomyces kanamyceticus.